Here is a 331-residue protein sequence, read N- to C-terminus: Ferredoxin--NADP reductase 2 (331 aa).

Positions 37, 45, 50, 90, 124, 285, and 326 each coordinate FAD.

This sequence belongs to the ferredoxin--NADP reductase type 2 family. As to quaternary structure, homodimer. It depends on FAD as a cofactor.

It catalyses the reaction 2 reduced [2Fe-2S]-[ferredoxin] + NADP(+) + H(+) = 2 oxidized [2Fe-2S]-[ferredoxin] + NADPH. The sequence is that of Ferredoxin--NADP reductase 2 from Bacillus velezensis (strain DSM 23117 / BGSC 10A6 / LMG 26770 / FZB42) (Bacillus amyloliquefaciens subsp. plantarum).